We begin with the raw amino-acid sequence, 1364 residues long: Formin-like protein 6 (1364 aa).

In terms of domain architecture, Phosphatase tensin-type spans 9–193 (YRKPPDGLLE…HYISRRNVSA (185 aa)). Catalysis depends on Cys126, which acts as the Phosphocysteine intermediate. Positions 199 to 338 (DRALTLDCVI…FRAEVLFSEM (140 aa)) constitute a C2 tensin-type domain. Disordered regions lie at residues 614–934 (KCTP…NLKP), 976–999 (VLPS…KPEK), and 1317–1364 (EAEA…ASAK). The segment covering 617–631 (PSPPPLLPPLAPVVP) has biased composition (pro residues). Residues 657-690 (SFPSLSPTQQKQSTSKLCQTILPTNHQLSSSNIT) show a composition bias toward polar residues. A compositionally biased stretch (pro residues) spans 734-743 (PPAPPPPPLQ). Low complexity predominate over residues 744–757 (SPSTPRCSPVRTLA). Composition is skewed to pro residues over residues 774–813 (GPPP…PAAP) and 856–865 (PSPPPPPPPC). Polar residues predominate over residues 916 to 929 (MSRSLQSGQAASRR). The 401-residue stretch at 922 to 1322 (SGQAASRRSN…KALKEAEAEK (401 aa)) folds into the FH2 domain. Positions 1317-1351 (EAEAEKTKKEPENAQKTKEPGNDKAKHNNSIKELD) are enriched in basic and acidic residues. Over residues 1353–1364 (SLQSPAQTASAK) the composition is skewed to polar residues.

This sequence belongs to the formin-like family. Class-II subfamily.

This is Formin-like protein 6 (FH6) from Oryza sativa subsp. japonica (Rice).